Consider the following 130-residue polypeptide: S-adenosylmethionine decarboxylase proenzyme (130 aa).

Serine 63 functions as the Schiff-base intermediate with substrate; via pyruvic acid in the catalytic mechanism. Serine 63 carries the post-translational modification Pyruvic acid (Ser); by autocatalysis. Histidine 68 serves as the catalytic Proton acceptor; for processing activity. The active-site Proton donor; for catalytic activity is the cysteine 83.

Belongs to the prokaryotic AdoMetDC family. Type 1 subfamily. As to quaternary structure, heterotetramer of two alpha and two beta chains arranged as a dimer of alpha/beta heterodimers. Pyruvate is required as a cofactor. In terms of processing, is synthesized initially as an inactive proenzyme. Formation of the active enzyme involves a self-maturation process in which the active site pyruvoyl group is generated from an internal serine residue via an autocatalytic post-translational modification. Two non-identical subunits are generated from the proenzyme in this reaction, and the pyruvate is formed at the N-terminus of the alpha chain, which is derived from the carboxyl end of the proenzyme. The post-translation cleavage follows an unusual pathway, termed non-hydrolytic serinolysis, in which the side chain hydroxyl group of the serine supplies its oxygen atom to form the C-terminus of the beta chain, while the remainder of the serine residue undergoes an oxidative deamination to produce ammonia and the pyruvoyl group blocking the N-terminus of the alpha chain.

The catalysed reaction is S-adenosyl-L-methionine + H(+) = S-adenosyl 3-(methylsulfanyl)propylamine + CO2. Its pathway is amine and polyamine biosynthesis; S-adenosylmethioninamine biosynthesis; S-adenosylmethioninamine from S-adenosyl-L-methionine: step 1/1. In terms of biological role, catalyzes the decarboxylation of S-adenosylmethionine to S-adenosylmethioninamine (dcAdoMet), the propylamine donor required for the synthesis of the polyamines spermine and spermidine from the diamine putrescine. This Thermotoga maritima (strain ATCC 43589 / DSM 3109 / JCM 10099 / NBRC 100826 / MSB8) protein is S-adenosylmethionine decarboxylase proenzyme (speH).